We begin with the raw amino-acid sequence, 306 residues long: Elongation factor Ts (306 aa).

Residues 80 to 83 form an involved in Mg(2+) ion dislocation from EF-Tu region; that stretch reads TDFV.

Belongs to the EF-Ts family.

It localises to the cytoplasm. Functionally, associates with the EF-Tu.GDP complex and induces the exchange of GDP to GTP. It remains bound to the aminoacyl-tRNA.EF-Tu.GTP complex up to the GTP hydrolysis stage on the ribosome. In Methylorubrum extorquens (strain CM4 / NCIMB 13688) (Methylobacterium extorquens), this protein is Elongation factor Ts.